A 693-amino-acid chain; its full sequence is Elongation factor G (693 aa).

The tr-type G domain maps to 8–284 (HMVRNIGIAA…AVIDYLPAPD (277 aa)). GTP contacts are provided by residues 17–24 (AHIDAGKT), 81–85 (DTPGH), and 135–138 (NKMD).

It belongs to the TRAFAC class translation factor GTPase superfamily. Classic translation factor GTPase family. EF-G/EF-2 subfamily.

The protein localises to the cytoplasm. Its function is as follows. Catalyzes the GTP-dependent ribosomal translocation step during translation elongation. During this step, the ribosome changes from the pre-translocational (PRE) to the post-translocational (POST) state as the newly formed A-site-bound peptidyl-tRNA and P-site-bound deacylated tRNA move to the P and E sites, respectively. Catalyzes the coordinated movement of the two tRNA molecules, the mRNA and conformational changes in the ribosome. The polypeptide is Elongation factor G (Nautilia profundicola (strain ATCC BAA-1463 / DSM 18972 / AmH)).